Here is a 146-residue protein sequence, read N- to C-terminus: Large ribosomal subunit protein uL15 (146 aa).

The disordered stretch occupies residues Met1 to Arg46. Basic residues predominate over residues Lys9–Gly19. The segment covering Arg20–Ser30 has biased composition (gly residues).

The protein belongs to the universal ribosomal protein uL15 family. As to quaternary structure, part of the 50S ribosomal subunit.

Its function is as follows. Binds to the 23S rRNA. This is Large ribosomal subunit protein uL15 from Phytoplasma mali (strain AT).